The primary structure comprises 296 residues: Tyrosine recombinase XerC (296 aa).

The Core-binding (CB) domain maps to methionine 1–methionine 84. The Tyr recombinase domain occupies tyrosine 105 to leucine 286. Catalysis depends on residues arginine 145, lysine 169, histidine 238, arginine 241, and histidine 264. Tyrosine 273 acts as the O-(3'-phospho-DNA)-tyrosine intermediate in catalysis.

This sequence belongs to the 'phage' integrase family. XerC subfamily. As to quaternary structure, forms a cyclic heterotetrameric complex composed of two molecules of XerC and two molecules of XerD.

It localises to the cytoplasm. Functionally, site-specific tyrosine recombinase, which acts by catalyzing the cutting and rejoining of the recombining DNA molecules. The XerC-XerD complex is essential to convert dimers of the bacterial chromosome into monomers to permit their segregation at cell division. It also contributes to the segregational stability of plasmids. This is Tyrosine recombinase XerC from Staphylococcus carnosus (strain TM300).